The chain runs to 230 residues: Ribose-5-phosphate isomerase A (230 aa).

Residues 29-32 (TGST), 85-88 (DGAD), and 98-101 (KGGG) each bind substrate. Glutamate 107 (proton acceptor) is an active-site residue. Lysine 125 contacts substrate.

The protein belongs to the ribose 5-phosphate isomerase family. Homodimer.

It catalyses the reaction aldehydo-D-ribose 5-phosphate = D-ribulose 5-phosphate. The protein operates within carbohydrate degradation; pentose phosphate pathway; D-ribose 5-phosphate from D-ribulose 5-phosphate (non-oxidative stage): step 1/1. Catalyzes the reversible conversion of ribose-5-phosphate to ribulose 5-phosphate. The protein is Ribose-5-phosphate isomerase A of Staphylococcus haemolyticus (strain JCSC1435).